Here is a 251-residue protein sequence, read N- to C-terminus: Coproheme decarboxylase (251 aa).

Residues Arg133, 147–151, His174, Gln187, and Ser225 each bind Fe-coproporphyrin III; that span reads YPMSK. Tyr147 is an active-site residue.

The protein belongs to the ChdC family. Type 1 subfamily. In terms of assembly, homopentamer. Homohexamer in solution. Requires Fe-coproporphyrin III as cofactor.

The catalysed reaction is Fe-coproporphyrin III + 2 H2O2 + 2 H(+) = heme b + 2 CO2 + 4 H2O. It catalyses the reaction Fe-coproporphyrin III + H2O2 + H(+) = harderoheme III + CO2 + 2 H2O. The enzyme catalyses harderoheme III + H2O2 + H(+) = heme b + CO2 + 2 H2O. The protein operates within porphyrin-containing compound metabolism; protoheme biosynthesis. Functionally, involved in coproporphyrin-dependent heme b biosynthesis. Catalyzes the decarboxylation of Fe-coproporphyrin III (coproheme) to heme b (protoheme IX), the last step of the pathway. The reaction occurs in a stepwise manner with a three-propionate intermediate. In Listeria monocytogenes serovar 1/2a (strain ATCC BAA-679 / EGD-e), this protein is Coproheme decarboxylase.